Here is a 163-residue protein sequence, read N- to C-terminus: PTS system fructose-specific EIIB component (163 aa).

The PTS EIIB type-4 domain maps to 1–163 (MMNIVLARID…FVQILRNVTK (163 aa)). His-15 functions as the Pros-phosphohistidine intermediate in the catalytic mechanism. The residue at position 15 (His-15) is a Phosphohistidine; by EIIA.

The protein localises to the cytoplasm. The catalysed reaction is D-fructose(out) + N(pros)-phospho-L-histidyl-[protein] = D-fructose 1-phosphate(in) + L-histidyl-[protein]. Functionally, the phosphoenolpyruvate-dependent sugar phosphotransferase system (sugar PTS), a major carbohydrate active -transport system, catalyzes the phosphorylation of incoming sugar substrates concomitantly with their translocation across the cell membrane. The enzyme II LevDE PTS system is involved in fructose transport. LevD and LevE act as negative regulators of the levanase operon. They may be involved in a PTS-mediated phosphorylation of a regulator. This chain is PTS system fructose-specific EIIB component, found in Bacillus subtilis (strain 168).